The following is a 132-amino-acid chain: U-scoloptoxin(05)-Er3a (132 aa).

Residues 1 to 19 (MRSWFVFVALLAVVFLPSS) form the signal peptide.

The protein belongs to the scoloptoxin-05 family. Contains 5 disulfide bonds. In terms of tissue distribution, expressed by the venom gland.

It is found in the secreted. The protein is U-scoloptoxin(05)-Er3a of Ethmostigmus rubripes (Giant centipede).